A 119-amino-acid polypeptide reads, in one-letter code: Enhancer of yellow 2 transcription factor (119 aa).

The interval 93–119 (LTENETEGTDNHDDDEDDEDENGTEDN) is disordered. Residues 96-119 (NETEGTDNHDDDEDDEDENGTEDN) show a composition bias toward acidic residues.

Belongs to the ENY2 family. Component of the nuclear pore complex (NPC)-associated AMEX complex (anchoring and mRNA export complex), composed of at least e(y)2 and xmas-2. Component of the SAGA transcription coactivator-HAT complexes, at least composed of Ada2b, e(y)2, Pcaf/Gcn5, Taf10 and Nipped-A/Trrap. Within the SAGA complex, e(y)2, Sgf11, and not/nonstop form an additional subcomplex of SAGA called the DUB module (deubiquitination module). Component of the THO complex, composed of at least e(y)2, HPR1, THO2, THOC5, THOC6 and THOC7. Interacts with e(y)1. Interacts with su(Hw) (via zinc fingers). Interacts with xmas-2; required for localization to the nuclear periphery. Interacts with the nuclear pore complex (NPC).

It is found in the nucleus. The protein resides in the nucleoplasm. It localises to the cytoplasm. In terms of biological role, involved in mRNA export coupled transcription activation by association with both the AMEX and the SAGA complexes. The SAGA complex is a multiprotein complex that activates transcription by remodeling chromatin and mediating histone acetylation and deubiquitination. Within the SAGA complex, participates in a subcomplex that specifically deubiquitinates histone H2B. The SAGA complex is recruited to specific gene promoters by activators, where it is required for transcription. Required for nuclear receptor-mediated transactivation. Involved in transcription elongation by recruiting the THO complex onto nascent mRNA. The AMEX complex functions in docking export-competent ribonucleoprotein particles (mRNPs) to the nuclear entrance of the nuclear pore complex (nuclear basket). AMEX participates in mRNA export and accurate chromatin positioning in the nucleus by tethering genes to the nuclear periphery. The polypeptide is Enhancer of yellow 2 transcription factor (Drosophila willistoni (Fruit fly)).